A 65-amino-acid polypeptide reads, in one-letter code: Large ribosomal subunit protein bL35 (65 aa).

The span at 1-16 (MPKQKTHRASAKRFKR) shows a compositional bias: basic residues. The disordered stretch occupies residues 1–20 (MPKQKTHRASAKRFKRTGSG).

It belongs to the bacterial ribosomal protein bL35 family.

This is Large ribosomal subunit protein bL35 from Streptococcus equi subsp. equi (strain 4047).